Consider the following 374-residue polypeptide: tRNA-specific 2-thiouridylase MnmA (374 aa).

ATP is bound by residues 8 to 15 (GLSGGVDS) and methionine 34. The segment at 104–106 (NPD) is interaction with target base in tRNA. Cysteine 109 (nucleophile) is an active-site residue. Cysteines 109 and 208 form a disulfide. Glycine 134 lines the ATP pocket. The tract at residues 158 to 160 (KDQ) is interaction with tRNA. The active-site Cysteine persulfide intermediate is cysteine 208. Residues 321–322 (RY) form an interaction with tRNA region.

Belongs to the MnmA/TRMU family.

Its subcellular location is the cytoplasm. The enzyme catalyses S-sulfanyl-L-cysteinyl-[protein] + uridine(34) in tRNA + AH2 + ATP = 2-thiouridine(34) in tRNA + L-cysteinyl-[protein] + A + AMP + diphosphate + H(+). Its function is as follows. Catalyzes the 2-thiolation of uridine at the wobble position (U34) of tRNA, leading to the formation of s(2)U34. This Mesoplasma florum (strain ATCC 33453 / NBRC 100688 / NCTC 11704 / L1) (Acholeplasma florum) protein is tRNA-specific 2-thiouridylase MnmA.